Consider the following 253-residue polypeptide: Sulfate transporter CysZ (253 aa).

Transmembrane regions (helical) follow at residues 31–51, 75–95, 151–171, and 222–242; these read FVIL…WWLF, LLWP…FSTI, IVLL…PVLW, and IPLL…AMWV.

It belongs to the CysZ family.

The protein localises to the cell inner membrane. Functionally, high affinity, high specificity proton-dependent sulfate transporter, which mediates sulfate uptake. Provides the sulfur source for the cysteine synthesis pathway. This Escherichia coli (strain 55989 / EAEC) protein is Sulfate transporter CysZ.